We begin with the raw amino-acid sequence, 310 residues long: MAQNSTQLEKISGSFTRLAEAFQLALTACREIEESLPSILGEKSEVSKPFKPAVTDPSNAKKEINMAIESPSKKATSPKKATPAAVAPVEATSAVDTSEAVASMTPNKRKARDPAQPKRPPSAYNLFQKNQRSEIKESLGEKSNDVKEVNKAMHEKWGSLSEDDRKTYEEEASKLREAYEEEMAAYNASKENASVADSRVTAEETSTKPSEDLSSPTKKDLIDFSETRPLAQASRATPDIKEQHAKKPKRKHTRSTVPTSNVEPVSQPQPSPDKIVSSPNPPSAKREKKKRRKSSMSSSITTPPTAKVAN.

Over residues 69–95 (ESPSKKATSPKKATPAAVAPVEATSAV) the composition is skewed to low complexity. The tract at residues 69 to 310 (ESPSKKATSP…TTPPTAKVAN (242 aa)) is disordered. Position 70 is a phosphoserine (S70). The residue at position 105 (T105) is a Phosphothreonine. The HMG box DNA-binding region spans 117-187 (PKRPPSAYNL…AYEEEMAAYN (71 aa)). 2 stretches are compositionally biased toward basic and acidic residues: residues 131–178 (QRSE…LREA) and 200–226 (VTAE…DFSE). 3 positions are modified to phosphoserine: S161, S214, and S215. T217 and T237 each carry phosphothreonine. The span at 255–268 (STVPTSNVEPVSQP) shows a compositional bias: polar residues. A phosphoserine mark is found at S271, S278, S294, S295, and S297. Residues T302 and T305 each carry the phosphothreonine modification.

It is found in the cytoplasm. This chain is HMG box-containing protein C28F2.11, found in Schizosaccharomyces pombe (strain 972 / ATCC 24843) (Fission yeast).